The following is a 448-amino-acid chain: MDFRYLPMTQEDEKEMLQTIGADSIEDLLADIPASVRDQGTLEEVGIPLPETDLIRTLSKLADQNMNTKQYPSFLGAGIYDHYAPAVVNHMLLRSEFYTAYTPYQPEISQGELQAIFEYQTMICELTGMDVANSSMYDGITALAEAAMLACAHKKKKTIVLSDGVHPEAHDVVRTYANGPGLEVETLPLVNGETAIANLDALEDVACVIVQYPNFYGRVEDLQALADATHAKGGLFIVSANPLALGLLEAPGKLGADITIGDCQPFGIPQSFGGPTCGYFTTTKALMRKIPGRLVGQTVDEDGKRGFVLTLQAREQHIRRDKATSNICSNQALNALAASIAMSALGKRGIRELATRNLQTAYALKKSLIQAGFHIVDDGPSFNEFVVELPIDATEAGKQLLQAGIIGGLPLGTFDESRSNQMLVCATELRTKEELDQFVTALGGLTHA.

It belongs to the GcvP family. N-terminal subunit subfamily. The glycine cleavage system is composed of four proteins: P, T, L and H. In this organism, the P 'protein' is a heterodimer of two subunits.

The catalysed reaction is N(6)-[(R)-lipoyl]-L-lysyl-[glycine-cleavage complex H protein] + glycine + H(+) = N(6)-[(R)-S(8)-aminomethyldihydrolipoyl]-L-lysyl-[glycine-cleavage complex H protein] + CO2. In terms of biological role, the glycine cleavage system catalyzes the degradation of glycine. The P protein binds the alpha-amino group of glycine through its pyridoxal phosphate cofactor; CO(2) is released and the remaining methylamine moiety is then transferred to the lipoamide cofactor of the H protein. In Exiguobacterium sibiricum (strain DSM 17290 / CCUG 55495 / CIP 109462 / JCM 13490 / 255-15), this protein is Probable glycine dehydrogenase (decarboxylating) subunit 1.